Here is a 45-residue protein sequence, read N- to C-terminus: MKAKSHLSNKKRKRASGFLARMKTKAGRKILARRRAKGRKRIAIK.

2 stretches are compositionally biased toward basic residues: residues 1 to 15 and 22 to 45; these read MKAKSHLSNKKRKRA and MKTKAGRKILARRRAKGRKRIAIK. The segment at 1–45 is disordered; it reads MKAKSHLSNKKRKRASGFLARMKTKAGRKILARRRAKGRKRIAIK.

This sequence belongs to the bacterial ribosomal protein bL34 family.

This Sulfurihydrogenibium sp. (strain YO3AOP1) protein is Large ribosomal subunit protein bL34.